A 1122-amino-acid polypeptide reads, in one-letter code: Transcription-repair-coupling factor (1122 aa).

Residues 593-758 (DLRNGMLMDR…MTGLKELSII (166 aa)) form the Helicase ATP-binding domain. 606 to 613 (GDVGFGKT) is an ATP binding site. The DEEQ box motif lies at 711–714 (DEEQ). The 155-residue stretch at 779 to 933 (IIRDALLREH…GFTIASRDMD (155 aa)) folds into the Helicase C-terminal domain.

This sequence in the N-terminal section; belongs to the UvrB family. It in the C-terminal section; belongs to the helicase family. RecG subfamily.

It localises to the cytoplasm. Its function is as follows. Couples transcription and DNA repair by recognizing RNA polymerase (RNAP) stalled at DNA lesions. Mediates ATP-dependent release of RNAP and its truncated transcript from the DNA, and recruitment of nucleotide excision repair machinery to the damaged site. The polypeptide is Transcription-repair-coupling factor (Rickettsia conorii (strain ATCC VR-613 / Malish 7)).